Here is an 87-residue protein sequence, read N- to C-terminus: Small ribosomal subunit protein uS17 (87 aa).

The protein belongs to the universal ribosomal protein uS17 family. Part of the 30S ribosomal subunit.

Its function is as follows. One of the primary rRNA binding proteins, it binds specifically to the 5'-end of 16S ribosomal RNA. In Hydrogenovibrio crunogenus (strain DSM 25203 / XCL-2) (Thiomicrospira crunogena), this protein is Small ribosomal subunit protein uS17.